We begin with the raw amino-acid sequence, 757 residues long: RNA-directed RNA polymerase catalytic subunit (757 aa).

A disordered region spans residues S50–Y82. The segment covering W55–P64 has biased composition (polar residues). 2 consecutive short sequence motifs (nuclear localization signal) follow at residues R187–M195 and R203–S216. The promoter-binding site stretch occupies residues R249–E256. Positions V286–Y483 constitute a RdRp catalytic domain.

Belongs to the influenza viruses polymerase PB1 family. Influenza RNA polymerase is composed of three subunits: PB1, PB2 and PA. Interacts (via N-terminus) with PA (via C-terminus). Interacts (via C-terminus) with PB2 (via N-terminus); this interaction is essential for transcription initiation. Phosphorylated by host PRKCA.

Its subcellular location is the host nucleus. It is found in the host cytoplasm. The catalysed reaction is RNA(n) + a ribonucleoside 5'-triphosphate = RNA(n+1) + diphosphate. Functionally, RNA-dependent RNA polymerase which is responsible for replication and transcription of virus RNA segments. The transcription of viral mRNAs occurs by a unique mechanism called cap-snatching. 5' methylated caps of cellular mRNAs are cleaved after 10-13 nucleotides by PA. In turn, these short capped RNAs are used as primers by PB1 for transcription of viral mRNAs. During virus replication, PB1 initiates RNA synthesis and copy vRNA into complementary RNA (cRNA) which in turn serves as a template for the production of more vRNAs. This Aves (Human) protein is RNA-directed RNA polymerase catalytic subunit.